The sequence spans 1943 residues: MHHSTRKRWLASIGAVAAVATLATGGAVTAQAADAPVIKNADVAYPSFKGSDDPMKTAANNTTYNPAVSYLQETFDNDVKNLAGIDTDHDFWIDKILTRTGAQPTGKGTNDKGAYSYEGSDGNNYLFTRGRAAYMYTHTPNQLGFVGDTAYWDQTSRSGFTVTVNADGSNQTLNEDASQRKQTPSYFTSLFQTGGKSLKIKEVKYITYNNVMVANLTVESTQDRDVTLTTASPFAAEGADGATELTGRVNVKNNLTTIYPRFSANNQDGSNWIVSGGKLTSTLSLKANEPQTVKIQLGLIANELPDSTKEYEARYTGDLKDAAASYKDSVTTYNKWWVDNAPYVDTPEDNIDKTVVYRWWLSRFNMLDANMPGNTFQYPTSIEGVLGYNNQIVLTSGMFMMDTKWFRNPEYSYGTWLSAGDTAKKSKAGYYYYHDNPGDPANWNHSYTQYITRAGWDSYKVHGGPSTVAEELADQGAEDVQGLLASKSEPDNNDNQNNNDNSLIDWSWWSMTGNDADAVSFSEPGRSGQRMDRADGSANMWANANAAAQAYKAAGDTANAEKMQAIADKIQKEVTTELWDKSDNLLKHKWLNDGAFAKYKEINNYYPYSEGLMPTGNEDYNKALRLFEDSNEFPIFPFFTANQADKAALNFPGSNNFSIINAQPLLQVYSAGIRNYDAAKNGYITNEQFKKLLYWVAFAHYQGGDNNYPDQNEFWNEDNNNVGDVNGDGVINNLDKNLDAAQNGGKITYRSWIHHTQLGTTNWTMVEDVAGMVPREDNKIELNPIEIPGWNYFTVNNLRYHDQDVSIVWDKDGSHYGGPAGYSLYVGGKLAFTSDKLAHLIYDPAAGTVEVKDDSSAQVTVGAEAVKNVKAANQVTFNADQRVTDLFAKSGTNVDSASKSTTNVAKDADVTGTTYAEKDTNYPAKNAVDGKTVMESFWGTKGSENKTDTLNIKFKDGKQKIDDIRLYFYQSSSSQTISGYAEPANYKLEYQKDDGTWAPIADQVRTPNYAGANYNRIQFTPVETTTIRVTFTPQAGMAVGVKEIEAYNTGIKADGTSENQTPQVDAYVSSSTSSGAKLVGTVKDDGLPAEGDVTTTWSQVSGPEGGTAKFVDASAASTTVTFNKEGDYVLKLTASDGEKEGSKEITVHGIPSDGTVNVAPQSSASASYTNGYQPKDNAKKVIDGQVVYANTPNETWNNWGDSTGVEPWLQLKWAGKVPLKKAKVFFWTDGGGVPMVSSWKLQYADADGNWQDVKLADGQSYTVNRNEGNEVKFADAVETDKLRVVFPKGAIVGASEFEAYAIEPVSVDEVNRLVQTGSKADDLKLPSTVSAVYTDGSRRDLAVTWGKVTDAQLAADAVFDVKGTVAGALNGTVAHIAARSDTASQTVGNAQPVEQTVYQNAKSIDLPATVPVKFPNGYNDDRKVTWKDADIKAIDLTKVGDYEVAGTVDDGSSSAAAKLTVHVVADPNGSSTPEPEPEPLVGWIEGKATRTTISPDSEATWSPAEGKLNDGVVVDDTWPTTDDQNVNDKVWGSWGKAKDGMYAQYDFGQSVTIDQSRAQFWANFAETDDSKGGLEVPDAWKIQYLAEDGSWKDVEPTEDYTVVRNSPASRADTDAKGWSAVTFKPVTTKSLRLVLTPYTGSSTFGAAVAEWGVHGIDGTEPEPTPVDKTALESALDTANGLDASRYTAASWAEFQQIIDAAQAVYDDANATAEQVAEQVTKLEDGQKALVALATDVEKSTLQAAIDAAKAEAASGKYTDKSVEALNKAIEAAEGVLKVGEVGEVTQAAVQEASASLNKAVKALEEKPAAETVKKESLEASIEQAKKADKSKYTEEAWQALQSQIAAAQKVYDDKDAKQADVDAAQDALDKAFWATKVEQKPGSQQPGVTDTDKDDKDNKGDRVPPTGAAVSVVAAAAVLLTAAGVTILKRRQSGDHGSARHSA.

The tat-type signal signal peptide spans 1–32 (MHHSTRKRWLASIGAVAAVATLATGGAVTAQA). F5/8 type C domains follow at residues 892–1049 (TNVD…AYNT) and 1142–1302 (SKEI…AYAI). The PKD domain occupies 1061–1157 (TPQVDAYVSS…HGIPSDGTVN (97 aa)). FIVAR domains follow at residues 1678–1716 (ANGL…EQVA), 1746–1790 (DAAK…AAVQ), and 1823–1864 (QAKK…VDAA). A disordered region spans residues 1875-1906 (TKVEQKPGSQQPGVTDTDKDDKDNKGDRVPPT). The span at 1890 to 1902 (DTDKDDKDNKGDR) shows a compositional bias: basic and acidic residues. A helical transmembrane segment spans residues 1908-1928 (AAVSVVAAAAVLLTAAGVTIL).

This sequence belongs to the glycosyl hydrolase 121 family. Predicted to be exported by the Tat system. The position of the signal peptide cleavage has not been experimentally proven.

It localises to the membrane. It catalyses the reaction 4-O-(beta-L-arabinofuranosyl-(1-&gt;2)-beta-L-arabinofuranosyl-(1-&gt;2)-beta-L-arabinofuranosyl)-(2S,4S)-4-hydroxyproline + H2O = 4-O-(beta-L-arabinofuranosyl)-(2S,4S)-4-hydroxyproline + beta-L-arabinofuranosyl-(1-&gt;2)-beta-L-arabinofuranose. Its function is as follows. Beta-L-arabinobiosidase that removes L-arabinofuranose-beta-1,2-L-arabinofuranose disaccharide from various substrates such as carrot extensin and potato lectin. Also acts on L-arabinofuranose (Ara)-beta-1,2-Ara-beta-1,2-Ara-beta-Hyp (Ara(3)-Hyp) but not on Ara-beta-1,3-Ara-beta-1,2-Ara-beta-1,2-Ara-beta--Hyp (Ara(4)-Hyp) or Ara-beta-1,2-Ara-beta-Hyp (Ara(2)-Hyp), suggesting a specificity for unmodified Ara(3)-Hyp substrate. In the presence of 1-alkanols, shows transglycosylation activity, retaining the anomeric configuration of the arabinofuranose residue. The protein is Beta-L-arabinobiosidase (hypBA2) of Bifidobacterium longum subsp. longum (strain ATCC 15707 / DSM 20219 / JCM 1217 / NCTC 11818 / E194b).